Reading from the N-terminus, the 108-residue chain is Insulin (108 aa).

Positions 1–24 (MALWTRLLPLLALLALWAPAPAQA) are cleaved as a signal peptide. 3 cysteine pairs are disulfide-bonded: cysteine 31/cysteine 94, cysteine 43/cysteine 107, and cysteine 93/cysteine 98. Positions 57–85 (EAENPQAGAVELGGGLGGLQALALEGPPQ) are cleaved as a propeptide — c peptide.

It belongs to the insulin family. Heterodimer of a B chain and an A chain linked by two disulfide bonds.

It is found in the secreted. In terms of biological role, insulin decreases blood glucose concentration. It increases cell permeability to monosaccharides, amino acids and fatty acids. It accelerates glycolysis, the pentose phosphate cycle, and glycogen synthesis in liver. The polypeptide is Insulin (INS) (Sus scrofa (Pig)).